A 133-amino-acid chain; its full sequence is Transcription antitermination protein NusB (133 aa).

Belongs to the NusB family.

Its function is as follows. Involved in transcription antitermination. Required for transcription of ribosomal RNA (rRNA) genes. Binds specifically to the boxA antiterminator sequence of the ribosomal RNA (rrn) operons. The polypeptide is Transcription antitermination protein NusB (Shouchella clausii (strain KSM-K16) (Alkalihalobacillus clausii)).